Here is a 70-residue protein sequence, read N- to C-terminus: Large ribosomal subunit protein eL38 (70 aa).

The protein belongs to the eukaryotic ribosomal protein eL38 family.

The polypeptide is Large ribosomal subunit protein eL38 (RPL38) (Artemia franciscana (Brine shrimp)).